A 424-amino-acid chain; its full sequence is Otefin (424 aa).

The 30-residue stretch at 1-30 folds into the LEM domain; sequence MADVDDFDSLSNAELRAKMLAQGLPNIPVT. The required for binding to Med and germline stem cell maintenance stretch occupies residues 1–50; the sequence is MADVDDFDSLSNAELRAKMLAQGLPNIPVTDSSRKVLVKRLRASIGGQAS. The disordered stretch occupies residues 42–186; sequence RASIGGQASP…SSKRADREEN (145 aa). Ser-44, Ser-50, and Ser-54 each carry phosphoserine. Phosphothreonine is present on Thr-63. The span at 65–80 shows a compositional bias: low complexity; it reads APAPGAPSAPAAASTP. The short motif at 92 to 99 is the Nuclear localization signal element; sequence ATKARRTI. Residues 103–133 are compositionally biased toward basic and acidic residues; that stretch reads EAKEPVRRLPEEAIRRRPDEADRLRSEEPVA. Phosphoserine is present on Ser-152. Positions 157 to 170 are enriched in basic and acidic residues; sequence SERKVVEPLRKPET. A phosphoserine mark is found at Ser-192 and Ser-198. Positions 259-278 are disordered; the sequence is PSVPSARAQTTSSTRSYDYA. The segment covering 262 to 274 has biased composition (low complexity); that stretch reads PSARAQTTSSTRS. Residues 271-400 are required for binding to Med; the sequence is STRSYDYASN…NRWLNSLEQK (130 aa). Ser-321 carries the phosphoserine modification. Thr-324 carries the post-translational modification Phosphothreonine. Ser-326 is subject to Phosphoserine. A Phosphothreonine modification is found at Thr-358. Residues Ser-378 and Ser-385 each carry the phosphoserine modification. The tract at residues 400-424 is essential for nuclear membrane localization and germline stem cell maintenance; it reads KYHIKSKLFIVLLVLLLIGVYYIFY. The interval 406–424 is essential for nuclear membrane localization; it reads KLFIVLLVLLLIGVYYIFY.

As to quaternary structure, interacts with Med. Interacts with Lam. Interacts with aurA, alphaTub84B, gammaTub23C and gammaTub37C. Interacts with Nemp. In terms of processing, phosphorylation at Thr-63 by aurA may be required for exit from mitosis. May be phosphorylated by Cdk1 and Pka-C1. As to expression, expressed in all cell types of the germarium and testis. Expressed in nurse cells, follicle cells and oocytes.

It is found in the nucleus inner membrane. It localises to the nucleus. Its subcellular location is the nucleoplasm. The protein resides in the cytoplasm. The protein localises to the chromosome. It is found in the cytoskeleton. It localises to the spindle pole. Its subcellular location is the microtubule organizing center. The protein resides in the centrosome. Its function is as follows. Inner nuclear membrane protein. Involved in the attachment of membrane vesicles to chromatin during nuclear assembly, and is probably required for centrosome maturation and cell cycle progression during mitosis. Essential for differentiation of certain tissues and the maintenance of progenitor cell populations. Required for the differentiation and maintenance of male and female germline stem cells (GSCs), as well as the maintenance of somatic cells in the GSC niche. This role is likely to be independent of the BMP (Dpp) pathway that negatively regulates bam transcription during GSC differentiation. During development, plays essential and redundant functions with the other LEM domain proteins; bocks and MAN1. Also has a redundant but important role with bocks during larval development. This is Otefin from Drosophila melanogaster (Fruit fly).